The chain runs to 217 residues: Probable transaldolase (217 aa).

The active-site Schiff-base intermediate with substrate is Lys83.

The protein belongs to the transaldolase family. Type 3B subfamily.

The protein localises to the cytoplasm. It carries out the reaction D-sedoheptulose 7-phosphate + D-glyceraldehyde 3-phosphate = D-erythrose 4-phosphate + beta-D-fructose 6-phosphate. It functions in the pathway carbohydrate degradation; pentose phosphate pathway; D-glyceraldehyde 3-phosphate and beta-D-fructose 6-phosphate from D-ribose 5-phosphate and D-xylulose 5-phosphate (non-oxidative stage): step 2/3. Its function is as follows. Transaldolase is important for the balance of metabolites in the pentose-phosphate pathway. This is Probable transaldolase from Phenylobacterium zucineum (strain HLK1).